Consider the following 487-residue polypeptide: CUGBP Elav-like family member 1 (487 aa).

Met-1 carries the N-acetylmethionine modification. At Thr-4 the chain carries Phosphothreonine. RRM domains follow at residues 16-99 (IKMF…PADS) and 108-188 (RKLF…FADT). A Glycyl lysine isopeptide (Lys-Gly) (interchain with G-Cter in SUMO2) cross-link involves residue Lys-109. Phosphoserine is present on residues Ser-179 and Ser-303. The segment at 277 to 310 (TPSGTNALTTSSSPLSVLTSSAGSSPSSSSSNSV) is disordered. Positions 283–310 (ALTTSSSPLSVLTSSAGSSPSSSSSNSV) are enriched in low complexity. One can recognise an RRM 3 domain in the interval 402 to 480 (ANLFIYHLPQ…KRLKVQLKRS (79 aa)).

Belongs to the CELF/BRUNOL family. As to quaternary structure, interacts with HNRNPH1; the interaction in RNA-dependent. Interacts with PARN. Component of an EIF2 complex at least composed of CELF1/CUGBP1, CALR, CALR3, EIF2S1, EIF2S2, HSP90B1 and HSPA5. Associates with polysomes.

Its subcellular location is the nucleus. It localises to the cytoplasm. RNA-binding protein implicated in the regulation of several post-transcriptional events. Involved in pre-mRNA alternative splicing, mRNA translation and stability. Mediates exon inclusion and/or exclusion in pre-mRNA that are subject to tissue-specific and developmentally regulated alternative splicing. Specifically activates exon 5 inclusion of cardiac isoforms of TNNT2 during heart remodeling at the juvenile to adult transition. Acts both as an activator and as a repressor of a pair of coregulated exons: promotes inclusion of the smooth muscle (SM) exon but exclusion of the non-muscle (NM) exon in actinin pre-mRNAs. Activates SM exon 5 inclusion by antagonizing the repressive effect of PTB. Promotes exclusion of exon 11 of the INSR pre-mRNA. Inhibits, together with HNRNPH1, insulin receptor (IR) pre-mRNA exon 11 inclusion in myoblast. Increases translation and controls the choice of translation initiation codon of CEBPB mRNA. Increases mRNA translation of CEBPB in aging liver. Increases translation of CDKN1A mRNA by antagonizing the repressive effect of CALR3. Mediates rapid cytoplasmic mRNA deadenylation. Recruits the deadenylase PARN to the poly(A) tail of EDEN-containing mRNAs to promote their deadenylation. Required for completion of spermatogenesis. Binds to (CUG)n triplet repeats in the 3'-UTR of transcripts such as DMPK and to Bruno response elements (BREs). Binds to muscle-specific splicing enhancer (MSE) intronic sites flanking the alternative exon 5 of TNNT2 pre-mRNA. Binds to AU-rich sequences (AREs or EDEN-like) localized in the 3'-UTR of JUN and FOS mRNAs. Binds to the IR RNA. Binds to the 5'-region of CDKN1A and CEBPB mRNAs. Binds with the 5'-region of CEBPB mRNA in aging liver. May be a specific regulator of miRNA biogenesis. Binds to primary microRNA pri-MIR140 and, with CELF2, negatively regulates the processing to mature miRNA. In Rattus norvegicus (Rat), this protein is CUGBP Elav-like family member 1 (Celf1).